The following is a 689-amino-acid chain: Pyocin-S2 (689 aa).

Residues His656, His681, and His685 each coordinate Zn(2+).

The protein belongs to the colicin/pyosin nuclease family. In terms of assembly, purified pyocin S2 makes up a complex of the two (large and small) proteins. The large protein, but not the pyocin complex, shows in vitro DNase activity.

In terms of biological role, causes breakdown of chromosomal DNA as well as complete inhibition of lipid synthesis in sensitive cells. In Pseudomonas aeruginosa (strain ATCC 15692 / DSM 22644 / CIP 104116 / JCM 14847 / LMG 12228 / 1C / PRS 101 / PAO1), this protein is Pyocin-S2 (pys2).